The chain runs to 448 residues: UDP-N-acetylmuramoylalanine--D-glutamate ligase (448 aa).

An ATP-binding site is contributed by 116 to 122 (GSNAKST).

This sequence belongs to the MurCDEF family.

It localises to the cytoplasm. The catalysed reaction is UDP-N-acetyl-alpha-D-muramoyl-L-alanine + D-glutamate + ATP = UDP-N-acetyl-alpha-D-muramoyl-L-alanyl-D-glutamate + ADP + phosphate + H(+). Its pathway is cell wall biogenesis; peptidoglycan biosynthesis. Its function is as follows. Cell wall formation. Catalyzes the addition of glutamate to the nucleotide precursor UDP-N-acetylmuramoyl-L-alanine (UMA). This chain is UDP-N-acetylmuramoylalanine--D-glutamate ligase, found in Pseudomonas savastanoi pv. phaseolicola (strain 1448A / Race 6) (Pseudomonas syringae pv. phaseolicola (strain 1448A / Race 6)).